Consider the following 506-residue polypeptide: ATP synthase subunit alpha (506 aa).

170 to 177 serves as a coordination point for ATP; it reads GDRQTGKT.

The protein belongs to the ATPase alpha/beta chains family. F-type ATPases have 2 components, CF(1) - the catalytic core - and CF(0) - the membrane proton channel. CF(1) has five subunits: alpha(3), beta(3), gamma(1), delta(1), epsilon(1). CF(0) has four main subunits: a(1), b(1), b'(1) and c(9-12).

It is found in the cellular thylakoid membrane. The enzyme catalyses ATP + H2O + 4 H(+)(in) = ADP + phosphate + 5 H(+)(out). In terms of biological role, produces ATP from ADP in the presence of a proton gradient across the membrane. The alpha chain is a regulatory subunit. The protein is ATP synthase subunit alpha of Synechococcus sp. (strain JA-3-3Ab) (Cyanobacteria bacterium Yellowstone A-Prime).